The chain runs to 396 residues: Elongation factor Tu 1 (396 aa).

The tr-type G domain occupies 10-206; that stretch reads KPHVNVGTIG…TLDTYIPEPE (197 aa). A G1 region spans residues 19 to 26; the sequence is GHVDHGKT. 19–26 contacts GTP; it reads GHVDHGKT. Threonine 26 lines the Mg(2+) pocket. The G2 stretch occupies residues 60 to 64; that stretch reads GITIN. The segment at 81-84 is G3; sequence DCPG. Residues 81-85 and 136-139 each bind GTP; these read DCPGH and NKCD. The G4 stretch occupies residues 136–139; the sequence is NKCD. A G5 region spans residues 174-176; sequence SAL.

The protein belongs to the TRAFAC class translation factor GTPase superfamily. Classic translation factor GTPase family. EF-Tu/EF-1A subfamily. Monomer.

Its subcellular location is the cytoplasm. The catalysed reaction is GTP + H2O = GDP + phosphate + H(+). In terms of biological role, GTP hydrolase that promotes the GTP-dependent binding of aminoacyl-tRNA to the A-site of ribosomes during protein biosynthesis. This Psychrobacter sp. (strain PRwf-1) protein is Elongation factor Tu 1.